We begin with the raw amino-acid sequence, 440 residues long: Thymidine phosphorylase (440 aa).

It belongs to the thymidine/pyrimidine-nucleoside phosphorylase family. As to quaternary structure, homodimer.

The enzyme catalyses thymidine + phosphate = 2-deoxy-alpha-D-ribose 1-phosphate + thymine. The protein operates within pyrimidine metabolism; dTMP biosynthesis via salvage pathway; dTMP from thymine: step 1/2. In terms of biological role, the enzymes which catalyze the reversible phosphorolysis of pyrimidine nucleosides are involved in the degradation of these compounds and in their utilization as carbon and energy sources, or in the rescue of pyrimidine bases for nucleotide synthesis. This is Thymidine phosphorylase from Klebsiella pneumoniae (strain 342).